Reading from the N-terminus, the 309-residue chain is Sodium/potassium-transporting ATPase subunit beta-1 (309 aa).

Residues 1 to 45 are Cytoplasmic-facing; sequence MSKNNGKGAKGEFEFPQPAKKQTFSEMIYNPQEGTFFGRTGKSWS. The chain crosses the membrane as a helical; Signal-anchor for type II membrane protein span at residues 46–66; that stretch reads QLLLFYTIFYIVLAALFTICM. Topologically, residues 67 to 309 are extracellular; the sequence is QGLLSTISDT…GSVTFQILLD (243 aa). An N-linked (GlcNAc...) asparagine glycan is attached at Asn133. Cystine bridges form between Cys143/Cys155 and Cys165/Cys179. Asn211 carries an N-linked (GlcNAc...) asparagine glycan. The cysteines at positions 225 and 282 are disulfide-linked.

The protein belongs to the X(+)/potassium ATPases subunit beta family. In terms of assembly, the sodium/potassium-transporting ATPase is composed of a catalytic alpha subunit, an auxiliary non-catalytic beta subunit and an additional regulatory subunit. Interacts with nkain. In embryos, it is expressed in the neurons of the CNS and PNS, in Garland cells and posterior spiracles. In adults, it is concentrated in the thorax and abdomen (muscle tissue, digestive system and Malpighian tubules) and weakly expressed in the head. Expression is diffuse in the nervous system.

The protein localises to the cell membrane. This is the non-catalytic component of the active enzyme, which catalyzes the hydrolysis of ATP coupled with the exchange of Na(+) and K(+) ions across the plasma membrane. The beta subunit regulates, through assembly of alpha/beta heterodimers, the number of sodium pumps transported to the plasma membrane. This is Sodium/potassium-transporting ATPase subunit beta-1 (nrv1) from Drosophila melanogaster (Fruit fly).